We begin with the raw amino-acid sequence, 158 residues long: 2-C-methyl-D-erythritol 2,4-cyclodiphosphate synthase (158 aa).

A divalent metal cation-binding residues include Asp8 and His10. 4-CDP-2-C-methyl-D-erythritol 2-phosphate is bound by residues 8-10 (DAH) and 34-35 (HS). Residue His42 participates in a divalent metal cation binding. Residues 56 to 58 (DIG), 132 to 135 (TTTE), and Arg142 contribute to the 4-CDP-2-C-methyl-D-erythritol 2-phosphate site.

Belongs to the IspF family. In terms of assembly, homotrimer. Requires a divalent metal cation as cofactor.

The enzyme catalyses 4-CDP-2-C-methyl-D-erythritol 2-phosphate = 2-C-methyl-D-erythritol 2,4-cyclic diphosphate + CMP. It participates in isoprenoid biosynthesis; isopentenyl diphosphate biosynthesis via DXP pathway; isopentenyl diphosphate from 1-deoxy-D-xylulose 5-phosphate: step 4/6. Involved in the biosynthesis of isopentenyl diphosphate (IPP) and dimethylallyl diphosphate (DMAPP), two major building blocks of isoprenoid compounds. Catalyzes the conversion of 4-diphosphocytidyl-2-C-methyl-D-erythritol 2-phosphate (CDP-ME2P) to 2-C-methyl-D-erythritol 2,4-cyclodiphosphate (ME-CPP) with a corresponding release of cytidine 5-monophosphate (CMP). This chain is 2-C-methyl-D-erythritol 2,4-cyclodiphosphate synthase, found in Nitrosococcus oceani (strain ATCC 19707 / BCRC 17464 / JCM 30415 / NCIMB 11848 / C-107).